Reading from the N-terminus, the 102-residue chain is Large ribosomal subunit protein bL21 (102 aa).

The protein belongs to the bacterial ribosomal protein bL21 family. As to quaternary structure, part of the 50S ribosomal subunit. Contacts protein L20.

This protein binds to 23S rRNA in the presence of protein L20. The chain is Large ribosomal subunit protein bL21 from Campylobacter lari (strain RM2100 / D67 / ATCC BAA-1060).